We begin with the raw amino-acid sequence, 1434 residues long: DNA-directed RNA polymerase subunit beta (1434 aa).

This sequence belongs to the RNA polymerase beta chain family. As to quaternary structure, the RNAP catalytic core consists of 2 alpha, 1 beta, 1 beta' and 1 omega subunit. When a sigma factor is associated with the core the holoenzyme is formed, which can initiate transcription.

It carries out the reaction RNA(n) + a ribonucleoside 5'-triphosphate = RNA(n+1) + diphosphate. Its function is as follows. DNA-dependent RNA polymerase catalyzes the transcription of DNA into RNA using the four ribonucleoside triphosphates as substrates. The polypeptide is DNA-directed RNA polymerase subunit beta (Ureaplasma parvum serovar 3 (strain ATCC 27815 / 27 / NCTC 11736)).